The sequence spans 370 residues: MANKNFSLTVYDSEYMETNNKIYQENMEKKIRTISEFPDKVLLKILSLLPSKDVVATGVLSKRWRSLWKDVKTFRTSSVESLQLKINPSATNKDIQSLVNMAVARSMRELRIEMICKNFELPKSFYMFSQLETVILDKVSLMDPPPDVHLPCLKRLHLLSVNSLTNVMIFTIDVPTLRILSIDNTSGKSRPKGVHGFVINTPSLSVNVVFDNPYKFLAPLGSTQYLSLCSVTSHTTYRPAVFSFIFLDHLELCLCSAEQWNLLTRILNYAPRLRVLQLKLYHKHCVKDTKNLMGNQPDLIPKSLSSHLEILEWRQYNDTAQEREAAKYILANASGLRKATFYTESTEKHGMLKEVRMCGQRFKNMSACVK.

Residues 31–77 enclose the F-box domain; that stretch reads IRTISEFPDKVLLKILSLLPSKDVVATGVLSKRWRSLWKDVKTFRTS. The 52-residue stretch at 292–343 folds into the FBD domain; that stretch reads LMGNQPDLIPKSLSSHLEILEWRQYNDTAQEREAAKYILANASGLRKATFYT.

This Arabidopsis thaliana (Mouse-ear cress) protein is Putative FBD-associated F-box protein At1g50980.